Reading from the N-terminus, the 648-residue chain is Macrolide export ATP-binding/permease protein MacB (648 aa).

In terms of domain architecture, ABC transporter spans 5–243; it reads LELCNVSRSY…QGVDAAVVNT (239 aa). 41 to 48 provides a ligand contact to ATP; it reads GVSGSGKS. The next 5 helical transmembrane spans lie at 273–293, 417–437, 523–543, 577–597, and 611–631; these read LLTM…VVVG, ANVV…IGVA, LFLT…VMNI, VLVC…IAFM, and LTAL…FGWL.

Belongs to the ABC transporter superfamily. Macrolide exporter (TC 3.A.1.122) family. In terms of assembly, homodimer. Part of the tripartite efflux system MacAB-TolC, which is composed of an inner membrane transporter, MacB, a periplasmic membrane fusion protein, MacA, and an outer membrane component, TolC. The complex forms a large protein conduit and can translocate molecules across both the inner and outer membranes. Interacts with MacA.

It is found in the cell inner membrane. Functionally, part of the tripartite efflux system MacAB-TolC. MacB is a non-canonical ABC transporter that contains transmembrane domains (TMD), which form a pore in the inner membrane, and an ATP-binding domain (NBD), which is responsible for energy generation. Confers resistance against macrolides. This Salmonella typhi protein is Macrolide export ATP-binding/permease protein MacB.